We begin with the raw amino-acid sequence, 292 residues long: tRNA pseudouridine synthase B (292 aa).

Asp-38 functions as the Nucleophile in the catalytic mechanism.

This sequence belongs to the pseudouridine synthase TruB family. Type 1 subfamily.

The catalysed reaction is uridine(55) in tRNA = pseudouridine(55) in tRNA. In terms of biological role, responsible for synthesis of pseudouridine from uracil-55 in the psi GC loop of transfer RNAs. In Streptococcus pneumoniae serotype 2 (strain D39 / NCTC 7466), this protein is tRNA pseudouridine synthase B.